A 453-amino-acid polypeptide reads, in one-letter code: Growth/differentiation factor 9 (453 aa).

An N-terminal signal peptide occupies residues 1-27; that stretch reads MALPNKFFLWFCCFAWLCFPISLDSLP. The propeptide occupies 28–318; it reads SRGEAQIVAR…EGVRSSRHRR (291 aa). Asn-163, Asn-236, Asn-255, and Asn-269 each carry an N-linked (GlcNAc...) asparagine glycan. A disordered region spans residues 304–328; sequence GEEAAEGVRSSRHRRDQESASSELK. Residues 318–328 are compositionally biased toward basic and acidic residues; that stretch reads RDQESASSELK. N-linked (GlcNAc...) asparagine glycosylation occurs at Asn-337. Disulfide bonds link Cys-352–Cys-418, Cys-381–Cys-450, and Cys-385–Cys-452.

Belongs to the TGF-beta family. As to quaternary structure, homodimer or heterodimer (Potential). But, in contrast to other members of this family, cannot be disulfide-linked. Post-translationally, phosphorylated; phosphorylation is critical for GDF9 function.

It localises to the secreted. Functionally, required for ovarian folliculogenesis. The sequence is that of Growth/differentiation factor 9 (GDF9) from Ovis aries (Sheep).